Here is a 480-residue protein sequence, read N- to C-terminus: Transmembrane protein 161A (480 aa).

A signal peptide spans 1-28 (MAVLGVQLVVTLFTATLMHRLAPHCSFA). Residues 29-98 (RWLLCNGSLF…LTAVDALVLR (70 aa)) lie on the Extracellular side of the membrane. Asn-34 carries N-linked (GlcNAc...) asparagine glycosylation. Residues 99–119 (FFLEYQWFVDFAVYSVGVYLF) traverse the membrane as a helical segment. Residues 120 to 134 (TEAYYFVLGPVQETN) are Cytoplasmic-facing. The chain crosses the membrane as a helical span at residues 135–155 (IAVFWCLLTLAFSLKVFLMVT). Over 156 to 166 (RLYFSTKEGGE) the chain is Extracellular. The helical transmembrane segment at 167 to 187 (RSVCLSFAFLFLLLAMLVQVV) threads the bilayer. Residues 188–224 (REETLELGLEPGLASMTQHLEPILKKQDWDWTLPVIK) are Cytoplasmic-facing. Residues 225-245 (LAIRLGLAVLGSLLGAFLIFP) traverse the membrane as a helical segment. Residues 246–263 (GLRLAQTHQDALTLSADR) are Extracellular-facing. Residues 264–284 (PLLQLLLHTSFLSPLCTLWLW) traverse the membrane as a helical segment. Residues 285 to 304 (TKPVARDFLYQAPTRNMTFS) lie on the Cytoplasmic side of the membrane. The chain crosses the membrane as a helical span at residues 305–325 (VPSEGAFDSLRLWVLVALCLL). Topologically, residues 326 to 370 (RLAVTRPHLQAYLCLAKARVEQLRKEAGRIEAREIQQRVVRVYCY) are extracellular. Residues 371 to 391 (VTVVSLQYLTPLILTLHCTLL) form a helical membrane-spanning segment. At 392–450 (LKTLGGYSWALSSTPPPLAPSQPSEALIPVDPAGDEAQQTAAQVAGILGGLLTPLFLRG) the chain is on the cytoplasmic side. Residues 451–473 (MLAYIIWWTAACQLLSSLFGLYF) form a helical membrane-spanning segment. The Extracellular portion of the chain corresponds to 474-480 (HQHLAAS).

This sequence belongs to the TMEM161 family.

The protein localises to the membrane. Its function is as follows. May play a role in protection against oxidative stress. Overexpression leads to reduced levels of oxidant-induced DNA damage and apoptosis. The protein is Transmembrane protein 161A (Tmem161a) of Mus musculus (Mouse).